The sequence spans 61 residues: Small ribosomal subunit protein uS14B (61 aa).

Residues Cys-24, Cys-27, Cys-40, and Cys-43 each contribute to the Zn(2+) site.

This sequence belongs to the universal ribosomal protein uS14 family. Zinc-binding uS14 subfamily. As to quaternary structure, part of the 30S ribosomal subunit. Contacts proteins S3 and S10. Zn(2+) serves as cofactor.

Functionally, binds 16S rRNA, required for the assembly of 30S particles and may also be responsible for determining the conformation of the 16S rRNA at the A site. The protein is Small ribosomal subunit protein uS14B of Bacillus licheniformis (strain ATCC 14580 / DSM 13 / JCM 2505 / CCUG 7422 / NBRC 12200 / NCIMB 9375 / NCTC 10341 / NRRL NRS-1264 / Gibson 46).